Reading from the N-terminus, the 338-residue chain is SPbeta prophage-derived uncharacterized protein YonB (338 aa).

This is SPbeta prophage-derived uncharacterized protein YonB (yonB) from Bacillus subtilis (strain 168).